A 316-amino-acid chain; its full sequence is Glycine--tRNA ligase alpha subunit (316 aa).

The protein belongs to the class-II aminoacyl-tRNA synthetase family. As to quaternary structure, tetramer of two alpha and two beta subunits.

It localises to the cytoplasm. It carries out the reaction tRNA(Gly) + glycine + ATP = glycyl-tRNA(Gly) + AMP + diphosphate. In Cupriavidus taiwanensis (strain DSM 17343 / BCRC 17206 / CCUG 44338 / CIP 107171 / LMG 19424 / R1) (Ralstonia taiwanensis (strain LMG 19424)), this protein is Glycine--tRNA ligase alpha subunit.